Reading from the N-terminus, the 737-residue chain is Palmitoyltransferase AKR1 (737 aa).

The interval 1 to 47 is disordered; sequence MKQIDSEDSITVPNDTPEDNSASSMQPVMSNLSIEEHQSENEPIEQE. Topologically, residues 1-304 are cytoplasmic; the sequence is MKQIDSEDSI…VYFKKSLHTK (304 aa). Residues 9 to 33 are compositionally biased toward polar residues; it reads SITVPNDTPEDNSASSMQPVMSNLS. ANK repeat units follow at residues 54-84, 90-119, 124-153, 157-190, 194-223, and 227-256; these read PLLS…DLKH, ERVS…DVNF, LNAT…DPSV, QGFN…DIDC, NGRT…SVKA, and GGFT…DFFQ. The next 2 helical transmembrane spans lie at 305–325 and 326–346; these read LVTF…FASI and HPIF…YTLK. Residues 347–364 lie on the Cytoplasmic side of the membrane; that stretch reads KYVIPAYAQRNTRQSFLK. Residues 365 to 385 traverse the membrane as a helical segment; it reads TPFLAGVFSGSVFWASYTWLT. Residues 386 to 396 are Lumenal-facing; that stretch reads RIMPLTLIEEP. A helical membrane pass occupies residues 397–417; the sequence is ITNLLFFAGVVLLASLFVKLV. At 418-493 the chain is on the cytoplasmic side; it reads RSDPGLIPEE…YNDIGLRNHK (76 aa). The region spanning 450–500 is the DHHC domain; the sequence is HFCISTWVRKPIRSKFSNFSRALVTRFDHFCPWIYNDIGLRNHKTFLFFIL. Cys-480 functions as the S-palmitoyl cysteine intermediate in the catalytic mechanism. Residues 494–514 traverse the membrane as a helical segment; it reads TFLFFILCLETCIFVFLKLCM. Topologically, residues 515–547 are lumenal; it reads EYFDVLEDTFEDDYDLNCGIFGEDLCAGFFFDT. The helical transmembrane segment at 548 to 568 threads the bilayer; the sequence is FTFLVLAWTCFQGIWVGFLTF. At 569 to 737 the chain is on the cytoplasmic side; the sequence is VQLFQTAKGV…ERHYLAEEIV (169 aa).

The protein belongs to the DHHC palmitoyltransferase family. AKR/ZDHHC17 subfamily.

It localises to the early endosome membrane. The protein localises to the golgi apparatus membrane. It catalyses the reaction L-cysteinyl-[protein] + hexadecanoyl-CoA = S-hexadecanoyl-L-cysteinyl-[protein] + CoA. In terms of biological role, palmitoyltransferase specific for casein kinase 1. The protein is Palmitoyltransferase AKR1 (AKR1) of Lachancea kluyveri (strain ATCC 58438 / CBS 3082 / BCRC 21498 / NBRC 1685 / JCM 7257 / NCYC 543 / NRRL Y-12651) (Yeast).